Reading from the N-terminus, the 331-residue chain is MWLWEDQGGLLGPFSFLLLVLLLVTRSPVNACLLTGSLFVLLRVFSFEPVPSCRALQVLKPRDRISAIAHRGGSHDAPENTLAAIRQAAKNGATGVELDIEFTSDGIPVLMHDNTVDRTTDGTGRLCDLTFEQIRKLNPAANHRLRNDFPDEKIPTLREAVAECLNHNLTIFFDVKGHAHKATEALKKMYMEFPQLYNNSVVCSFLPEVIYKMRQTDRDVITALTHRPWSLSHTGDGKPRYDTFWKHFIFVMMDILLDWSMHNILWYLCGISAFLMQKDFVSPAYLKKWSAKGIQVVGWTVNTFDEKSYYESHLGSSYITDSMVEDCEPHF.

Over 1 to 3 (MWL) the chain is Cytoplasmic. Residues 4–24 (WEDQGGLLGPFSFLLLVLLLV) traverse the membrane as a helical segment. At 25 to 247 (TRSPVNACLL…KPRYDTFWKH (223 aa)) the chain is on the lumenal side. In terms of domain architecture, GP-PDE spans 65-331 (ISAIAHRGGS…SMVEDCEPHF (267 aa)). Residues E97 and D99 each contribute to the Mg(2+) site. A glycan (N-linked (GlcNAc...) asparagine) is linked at N168. Residue D174 coordinates Mg(2+). N-linked (GlcNAc...) asparagine glycosylation occurs at N198. A helical transmembrane segment spans residues 248–268 (FIFVMMDILLDWSMHNILWYL). The Cytoplasmic portion of the chain corresponds to 269–331 (CGISAFLMQK…SMVEDCEPHF (63 aa)).

The protein belongs to the glycerophosphoryl diester phosphodiesterase family. In terms of assembly, interacts with PRAF2. Interacts with RGS16. The cofactor is Mg(2+). Post-translationally, N-glycosylated. Widely expressed.

Its subcellular location is the cell membrane. The protein localises to the cytoplasmic vesicle membrane. The catalysed reaction is sn-glycero-3-phospho-1D-myo-inositol + H2O = myo-inositol + sn-glycerol 3-phosphate + H(+). It catalyses the reaction 1-O-(1Z-octadecenyl)-sn-glycero-3-phospho-(N-5Z,8Z,11Z,14Z-eicosatetraenoyl)-ethanolamine + H2O = 1-O-(1Z-octadecenyl)-sn-glycero-3-phosphate + N-(5Z,8Z,11Z,14Z-eicosatetraenoyl)-ethanolamine + H(+). It carries out the reaction 1-O-(1Z-octadecenyl)-sn-glycero-3-phospho-(N-9Z-octadecenoyl)-ethanolamine + H2O = 1-O-(1Z-octadecenyl)-sn-glycero-3-phosphate + N-(9Z-octadecenoyl) ethanolamine + H(+). The enzyme catalyses 1-O-(1Z-octadecenyl)-sn-glycero-3-phospho-N-hexadecanoyl-ethanolamine + H2O = 1-O-(1Z-octadecenyl)-sn-glycero-3-phosphate + N-hexadecanoylethanolamine + H(+). The catalysed reaction is N-(4Z,7Z,10Z,13Z,16Z,19Z)-docosahexaenoyl-sn-glycero-3-phosphoethanolamine + H2O = N-(4Z,7Z,10Z,13Z,16Z,19Z)-docosahexaenoyl ethanolamine + sn-glycerol 3-phosphate + H(+). It catalyses the reaction N-eicosanoyl-sn-glycero-3-phosphoethanolamine + H2O = N-eicosanoyl ethanolamine + sn-glycerol 3-phosphate + H(+). It carries out the reaction N-hexadecanoyl-sn-glycero-3-phosphoethanolamine + H2O = N-hexadecanoylethanolamine + sn-glycerol 3-phosphate + H(+). The enzyme catalyses N-(9Z-octadecenoyl)-sn-glycero-3-phosphoethanolamine + H2O = N-(9Z-octadecenoyl) ethanolamine + sn-glycerol 3-phosphate + H(+). The catalysed reaction is N-(5Z,8Z,11Z,14Z-eicosatetraenoyl)-sn-glycero-3-phosphoethanolamine + H2O = N-(5Z,8Z,11Z,14Z-eicosatetraenoyl)-ethanolamine + sn-glycerol 3-phosphate + H(+). Its activity is regulated as follows. Inhibited by EDTA, calcium chloride, and zinc chloride. Enhanced by magnesium chloride. Glycerophosphodiester phosphodiesterase activity can be modulated by G-protein signaling pathways. Hydrolyzes the phosphodiester bond of glycerophosphodiesters such as glycerophosphoinositol (GroPIns) and glycerophosphoethanolamine (GroPEth), to yield a glycerol phosphate and an alcohol. Hydrolyzes glycerophospho-N-acylethanolamines to N-acylethanolamines in the brain and participates in bioactive N-acylethanolamine biosynthesis such as anandamide (an endocannabinoid), N-palmitoylethanolamine (an anti-inflammatory), and N-oleoylethanolamine (an anorexic). In addition, has a lysophospholipase D activity by hydrolyzing N-acyl-lysoplasmenylethanolamine (N-acyl-lysoPlsEt) to N-acylethanolamine. However lysophospholipase D activity is lower than glycerophosphodiester phosphodiesterase activity. Has little or no activity towards glycerophosphocholine. In Homo sapiens (Human), this protein is Glycerophosphodiester phosphodiesterase 1.